The sequence spans 261 residues: tRNA pseudouridine synthase A (261 aa).

Residue D51 is the Nucleophile of the active site. A substrate-binding site is contributed by Y109.

It belongs to the tRNA pseudouridine synthase TruA family. Homodimer.

The catalysed reaction is uridine(38/39/40) in tRNA = pseudouridine(38/39/40) in tRNA. In terms of biological role, formation of pseudouridine at positions 38, 39 and 40 in the anticodon stem and loop of transfer RNAs. The sequence is that of tRNA pseudouridine synthase A from Photobacterium profundum (strain SS9).